A 387-amino-acid polypeptide reads, in one-letter code: 3-ketoacyl-CoA thiolase (387 aa).

The Acyl-thioester intermediate role is filled by cysteine 91. Catalysis depends on proton acceptor residues histidine 343 and cysteine 373.

The protein belongs to the thiolase-like superfamily. Thiolase family. In terms of assembly, heterotetramer of two alpha chains (FadB) and two beta chains (FadA).

The protein resides in the cytoplasm. It catalyses the reaction an acyl-CoA + acetyl-CoA = a 3-oxoacyl-CoA + CoA. It functions in the pathway lipid metabolism; fatty acid beta-oxidation. Its function is as follows. Catalyzes the final step of fatty acid oxidation in which acetyl-CoA is released and the CoA ester of a fatty acid two carbons shorter is formed. The sequence is that of 3-ketoacyl-CoA thiolase from Vibrio vulnificus (strain YJ016).